Consider the following 597-residue polypeptide: MSKVRIYTLAKDLGVDNHKMLEILDGLGVSYKSVSSTIDEENVEIIKQILADEAAEGGDAAPAAASAPAAATAEPEEADETPAAAAQADAEPASDLPHRAPVVTIMGHVDHGKTSLLDYIRKTRVAAKEAGGITQHVGAFEAKTSKGKIVFIDTPGHEAFTTIRARGANVADIAIIVIAADDSLMPQTREAIAHAQAAKVPMLIAINKVDLPQADPEKVKTDLTQLNLVPEEYGGDVIVVPVSAKTGEGVEDLLEYISLTAELEDLRADPKGQFSGVIIEGRVDKQAGVLATVMVQEGTLHVGDFLVVGENYGKIKAMTDSNGGRIKEAGPSTPVQILGFSEVPSSGETVVSAKNEHAAREIVAQRASDRRDEEDARERRKAQRSLADLLGPLGEVHTVNLILRADTQGSLEAIQGILARKETEDVKLNVMLAGIGAPTEGDVLLASTAEAQILCFNVTPSAAVTKVAETKEIPIKAYRIIYEMIDEVDRLIKGNLDPVFEEQYLGRAEVRMVIHHPKSGNIAGSYVTDGMFKRNAKAKVTRGKEVVYEGTVVGLKRFKDDVREVQQGYECGINIDWNDVQEGDIIEASEMVEVEPR.

2 stretches are compositionally biased toward low complexity: residues 57–73 and 81–95; these read GGDA…AATA and TPAA…PASD. The tract at residues 57–96 is disordered; sequence GGDAAPAAASAPAAATAEPEEADETPAAAAQADAEPASDL. The region spanning 98–271 is the tr-type G domain; that stretch reads HRAPVVTIMG…ELEDLRADPK (174 aa). Positions 107–114 are G1; it reads GHVDHGKT. 107-114 is a GTP binding site; the sequence is GHVDHGKT. A G2 region spans residues 132–136; the sequence is GITQH. The interval 153–156 is G3; that stretch reads DTPG. GTP contacts are provided by residues 153–157 and 207–210; these read DTPGH and NKVD. Positions 207–210 are G4; the sequence is NKVD. A G5 region spans residues 243–245; it reads SAK.

This sequence belongs to the TRAFAC class translation factor GTPase superfamily. Classic translation factor GTPase family. IF-2 subfamily.

Its subcellular location is the cytoplasm. One of the essential components for the initiation of protein synthesis. Protects formylmethionyl-tRNA from spontaneous hydrolysis and promotes its binding to the 30S ribosomal subunits. Also involved in the hydrolysis of GTP during the formation of the 70S ribosomal complex. The sequence is that of Translation initiation factor IF-2 from Deinococcus radiodurans (strain ATCC 13939 / DSM 20539 / JCM 16871 / CCUG 27074 / LMG 4051 / NBRC 15346 / NCIMB 9279 / VKM B-1422 / R1).